Consider the following 337-residue polypeptide: Anthranilate phosphoribosyltransferase (337 aa).

Residues Gly81, 84–85, Ser89, 91–94, 109–117, and Ala121 each bind 5-phospho-alpha-D-ribose 1-diphosphate; these read GD, NVST, and KHGNRALSS. Gly81 is an anthranilate binding site. Position 93 (Ser93) interacts with Mg(2+). Asn112 contributes to the anthranilate binding site. Arg167 contacts anthranilate. Residues Asp226 and Glu227 each contribute to the Mg(2+) site.

Belongs to the anthranilate phosphoribosyltransferase family. In terms of assembly, homodimer. Mg(2+) serves as cofactor.

It catalyses the reaction N-(5-phospho-beta-D-ribosyl)anthranilate + diphosphate = 5-phospho-alpha-D-ribose 1-diphosphate + anthranilate. The protein operates within amino-acid biosynthesis; L-tryptophan biosynthesis; L-tryptophan from chorismate: step 2/5. Functionally, catalyzes the transfer of the phosphoribosyl group of 5-phosphorylribose-1-pyrophosphate (PRPP) to anthranilate to yield N-(5'-phosphoribosyl)-anthranilate (PRA). The sequence is that of Anthranilate phosphoribosyltransferase from Nitrobacter hamburgensis (strain DSM 10229 / NCIMB 13809 / X14).